The primary structure comprises 196 residues: Aliphatic amidase regulator (196 aa).

Residues 129 to 190 (MAKLKQKTEQ…PILKIAQELL (62 aa)) form the ANTAR domain.

As to quaternary structure, forms a complex with AmiC.

In terms of biological role, positive controlling element of AmiE, the gene for aliphatic amidase. Acts as a transcriptional antitermination factor. It is thought to allow RNA polymerase read through a rho-independent transcription terminator between the AmiE promoter and gene. The chain is Aliphatic amidase regulator (amiR) from Pseudomonas aeruginosa (strain ATCC 15692 / DSM 22644 / CIP 104116 / JCM 14847 / LMG 12228 / 1C / PRS 101 / PAO1).